Here is a 152-residue protein sequence, read N- to C-terminus: MKLILTADVDHLGSIGDTVEVKDGYGRNFLLPRGLAIVASRGAQKQADEIRRARETKSVRDLEHANEIKAAIEALGPIALPVKTSADSGKLFGSVTAADVVAAIKKAGGPNLDKRIVRLPKTHIKAVGTHFVSVHLHPEIDVEVSLDVVAQS.

This sequence belongs to the bacterial ribosomal protein bL9 family.

Binds to the 23S rRNA. The chain is Large ribosomal subunit protein bL9 from Mycobacterium bovis (strain ATCC BAA-935 / AF2122/97).